The sequence spans 299 residues: Bifunctional protein FolD (299 aa).

Residues 168–170, S193, and I234 contribute to the NADP(+) site; that span reads GRS.

The protein belongs to the tetrahydrofolate dehydrogenase/cyclohydrolase family. Homodimer.

The enzyme catalyses (6R)-5,10-methylene-5,6,7,8-tetrahydrofolate + NADP(+) = (6R)-5,10-methenyltetrahydrofolate + NADPH. It catalyses the reaction (6R)-5,10-methenyltetrahydrofolate + H2O = (6R)-10-formyltetrahydrofolate + H(+). The protein operates within one-carbon metabolism; tetrahydrofolate interconversion. Functionally, catalyzes the oxidation of 5,10-methylenetetrahydrofolate to 5,10-methenyltetrahydrofolate and then the hydrolysis of 5,10-methenyltetrahydrofolate to 10-formyltetrahydrofolate. The chain is Bifunctional protein FolD from Brucella abortus (strain S19).